The primary structure comprises 792 residues: Phenylalanine--tRNA ligase beta subunit (792 aa).

A tRNA-binding domain is found at 39–147 (GEALDLIVVA…DDAPIGTPLA (109 aa)). Positions 400–475 (PAPASILLRR…RIRGYEHLPT (76 aa)) constitute a B5 domain. Mg(2+)-binding residues include D453, D459, E462, and E463. The FDX-ACB domain maps to 698-791 (SRFPFVRRDL…IQQRHDVRIR (94 aa)).

This sequence belongs to the phenylalanyl-tRNA synthetase beta subunit family. Type 1 subfamily. As to quaternary structure, tetramer of two alpha and two beta subunits. It depends on Mg(2+) as a cofactor.

It is found in the cytoplasm. It carries out the reaction tRNA(Phe) + L-phenylalanine + ATP = L-phenylalanyl-tRNA(Phe) + AMP + diphosphate + H(+). The chain is Phenylalanine--tRNA ligase beta subunit (pheT) from Xylella fastidiosa (strain 9a5c).